The primary structure comprises 345 residues: uncharacterized protein (345 aa).

Disordered stretches follow at residues 1–58 (MPSP…WRGD) and 139–165 (KTNS…NSPK). A compositionally biased stretch (basic and acidic residues) spans 27–39 (IKGEGSDDGKEKS). A compositionally biased stretch (polar residues) spans 154–165 (KQGSAESKNSPK).

It belongs to the MG307/MG309/MG338 family.

This is an uncharacterized protein from Mycoplasma pneumoniae (strain ATCC 29342 / M129 / Subtype 1) (Mycoplasmoides pneumoniae).